A 152-amino-acid chain; its full sequence is Large ribosomal subunit protein bL9 (152 aa).

It belongs to the bacterial ribosomal protein bL9 family.

Functionally, binds to the 23S rRNA. The sequence is that of Large ribosomal subunit protein bL9 from Nostoc punctiforme (strain ATCC 29133 / PCC 73102).